The following is a 305-amino-acid chain: Homoserine O-succinyltransferase (305 aa).

Cys-142 (acyl-thioester intermediate) is an active-site residue. 2 residues coordinate substrate: Lys-163 and Ser-192. Residue His-235 is the Proton acceptor of the active site. Glu-237 is a catalytic residue. Arg-249 contributes to the substrate binding site.

It belongs to the MetA family.

It is found in the cytoplasm. The catalysed reaction is L-homoserine + succinyl-CoA = O-succinyl-L-homoserine + CoA. Its pathway is amino-acid biosynthesis; L-methionine biosynthesis via de novo pathway; O-succinyl-L-homoserine from L-homoserine: step 1/1. In terms of biological role, transfers a succinyl group from succinyl-CoA to L-homoserine, forming succinyl-L-homoserine. This Psychromonas ingrahamii (strain DSM 17664 / CCUG 51855 / 37) protein is Homoserine O-succinyltransferase.